The following is a 922-amino-acid chain: MISLKVCGFIQIWSQKTGMTKLKEALIETVQRQKEIKLVVTFKSGKFIRIFQLSNNIRSVVLRHCKKRQSHLRLTLKNNVFLFIDKLSYRDAKQLNMFLDIIHQNKSQQPMKSDDDWSVFESRNMLKEIDKTSFYSICNKPSYQKMPLFMSKSPTHVKKGILENQGGKGQNTLSSDVQTNEDILKEDNPVPNKKYKTDSLKYIQSNRKNPSSLEDLEKDRDLKLGPSFNTNCNGNPNLDETVLATQTLNAKNGLTSPLEPEHSQGDPRCNKAQVPLDSHSQQLQQGFPNLGNTCYMNAVLQSLFAIPSFADDLLTQGVPWEYIPFEALIMTLTQLLALKDFCSTKIKRELLGNVKKVISAVAEIFSGNMQNDAHEFLGQCLDQLKEDMEKLNATLNTGKECGDENSSPQMHVGSAATKVFVCPVVANFEFELQLSLICKACGHAVLKVEPNNYLSINLHQETKPLPLSIQNSLDLFFKEEELEYNCQMCKQKSCVARHTFSRLSRVLIIHLKRYSFNNAWLLVKNNEQVYIPKSLSLSSYCNESTKPPLPLSSSAPVGKCEVLEVSQEMISEINSPLTPSMKLTSESSDSLVLPVEPDKNADLQRFQRDCGDASQEQHQRDLENGSALESELVHFRDRAIGEKELPVADSLMDQGDISLPVMYEDGGKLISSPDTRLVEVHLQEVPQHPELQKYEKTNTFVEFNFDSVTESTNGFYDCKENRIPEGSQGMAEQLQQCIEESIIDEFLQQAPPPGVRKLDAQEHTEETLNQSTELRLQKADLNHLGALGSDNPGNKNILDAENTRGEAKELTRNVKMGDPLQAYRLISVVSHIGSSPNSGHYISDVYDFQKQAWFTYNDLCVSEISETKMQEARLHSGYIFFYMHNGIFEELLRKAENSRLPSTQAGVIPQGEYEGDSLYRPA.

Residues 160-196 are disordered; it reads GILENQGGKGQNTLSSDVQTNEDILKEDNPVPNKKYK. Polar residues predominate over residues 170–181; that stretch reads QNTLSSDVQTNE. A USP domain is found at 285–885; sequence QGFPNLGNTC…SGYIFFYMHN (601 aa). C294 functions as the Nucleophile in the catalytic mechanism. H840 acts as the Proton acceptor in catalysis.

Belongs to the peptidase C19 family.

It localises to the cytoplasm. The protein resides in the perinuclear region. The catalysed reaction is Thiol-dependent hydrolysis of ester, thioester, amide, peptide and isopeptide bonds formed by the C-terminal Gly of ubiquitin (a 76-residue protein attached to proteins as an intracellular targeting signal).. Functionally, deubiquitinase involved in innate antiviral immunity by mediating 'Lys-48'-linked deubiquitination of CGAS, thereby promoting its stabilization. This chain is Ubiquitin carboxyl-terminal hydrolase 29, found in Homo sapiens (Human).